The chain runs to 965 residues: Sarcosine oxidase subunit alpha (965 aa).

NAD(+) contacts are provided by A139, D158, E159, R160, T166, V205, A418, L423, and T425. (6R)-5,10-methylene-5,6,7,8-tetrahydrofolate-binding residues include T692 and E784.

This sequence belongs to the GcvT family. In terms of assembly, heterotetramer composed of subunits alpha (SoxA), beta (SoxB), gamma (SoxG) and delta (SoxD). Requires NAD(+) as cofactor.

The protein localises to the cytoplasm. The catalysed reaction is sarcosine + (6S)-5,6,7,8-tetrahydrofolate + O2 = (6R)-5,10-methylene-5,6,7,8-tetrahydrofolate + glycine + H2O2. It catalyses the reaction sarcosine + O2 + H2O = formaldehyde + glycine + H2O2. With respect to regulation, inhibited by Zn(2+), Cu(2+), Cd(2+), Hg(2+), Ag(+), p-chloromercuribenzoate (p-CMB), iodoacetamide, N-ethylmaleimide, CN(-), o-phenanthroline and sodium lauryl sulfate. In terms of biological role, in the presence of tetrahydrofolate, catalyzes the oxidative demethylation of sarcosine to yield glycine, 5,10-methylenetetrahydrofolate and hydrogen peroxide. In the absence of tetrahydrofolate, catalyzes the oxidative demethylation of sarcosine to yield glycine, formaldehyde and hydrogen peroxide. Can also use N-methyl-L-alanine and N-ethyl-L-glycine. Is very specific for oxygen as an acceptor. In Corynebacterium sp. (strain U-96), this protein is Sarcosine oxidase subunit alpha.